A 393-amino-acid polypeptide reads, in one-letter code: Chorismate synthase (393 aa).

NADP(+)-binding residues include Arg40 and Arg46. FMN is bound by residues 129–131 (RAS), 250–251 (QA), Gly301, 316–320 (KPIST), and Arg342.

The protein belongs to the chorismate synthase family. As to quaternary structure, homotetramer. FMNH2 serves as cofactor.

The enzyme catalyses 5-O-(1-carboxyvinyl)-3-phosphoshikimate = chorismate + phosphate. It participates in metabolic intermediate biosynthesis; chorismate biosynthesis; chorismate from D-erythrose 4-phosphate and phosphoenolpyruvate: step 7/7. In terms of biological role, catalyzes the anti-1,4-elimination of the C-3 phosphate and the C-6 proR hydrogen from 5-enolpyruvylshikimate-3-phosphate (EPSP) to yield chorismate, which is the branch point compound that serves as the starting substrate for the three terminal pathways of aromatic amino acid biosynthesis. This reaction introduces a second double bond into the aromatic ring system. The polypeptide is Chorismate synthase (Acidobacterium capsulatum (strain ATCC 51196 / DSM 11244 / BCRC 80197 / JCM 7670 / NBRC 15755 / NCIMB 13165 / 161)).